The primary structure comprises 351 residues: Peptide chain release factor 1 (351 aa).

Residue Gln-229 is modified to N5-methylglutamine.

The protein belongs to the prokaryotic/mitochondrial release factor family. Methylated by PrmC. Methylation increases the termination efficiency of RF1.

Its subcellular location is the cytoplasm. In terms of biological role, peptide chain release factor 1 directs the termination of translation in response to the peptide chain termination codons UAG and UAA. The protein is Peptide chain release factor 1 of Cereibacter sphaeroides (strain ATCC 17023 / DSM 158 / JCM 6121 / CCUG 31486 / LMG 2827 / NBRC 12203 / NCIMB 8253 / ATH 2.4.1.) (Rhodobacter sphaeroides).